A 171-amino-acid polypeptide reads, in one-letter code: Putative phosphoesterase BPUM_1117 (171 aa).

His-34 acts as the Proton donor in catalysis. 2 short sequence motifs (HXTX) span residues His-34–Leu-37 and His-115–Val-118. His-115 acts as the Proton acceptor in catalysis.

This sequence belongs to the 2H phosphoesterase superfamily. YjcG family.

In Bacillus pumilus (strain SAFR-032), this protein is Putative phosphoesterase BPUM_1117.